The sequence spans 631 residues: ATP-dependent RNA helicase mrh4, mitochondrial (631 aa).

The N-terminal 45 residues, 1–45 (MNRLGRLPLPLPPSVCLFCRFRATASLPSSLQATRSMATARLRRR), are a transit peptide targeting the mitochondrion. The tract at residues 68 to 112 (KERFGPFAGMNQTEARIRETPRARSRAAQKRSGEPEEDSQKESPL) is disordered. Residues 98–108 (RSGEPEEDSQK) are compositionally biased toward basic and acidic residues. The Q motif signature appears at 141–174 (TSFDQFQLLPVVRNSISSQALPGLVDVTPTPIQR). The span at 180–193 (LLEEPKTEKKPTKA) shows a compositional bias: basic and acidic residues. The disordered stretch occupies residues 180–199 (LLEEPKTEKKPTKADDDEPR). Positions 194-406 (DDDEPRYDQY…RKRYPDIKRL (213 aa)) constitute a Helicase ATP-binding domain. 207–214 (AETGSGKT) is an ATP binding site. The interval 229 to 249 (EARDKELEKKEQEEKAREREE) is disordered. The DEAD box motif lies at 353-356 (DEAD). The Helicase C-terminal domain occupies 455-631 (GPYASYVAPK…EGMFRGQALI (177 aa)).

Belongs to the DEAD box helicase family. MRH4 subfamily.

The protein resides in the mitochondrion. The catalysed reaction is ATP + H2O = ADP + phosphate + H(+). In terms of biological role, ATP-binding RNA helicase involved in mitochondrial RNA metabolism. Required for maintenance of mitochondrial DNA. The polypeptide is ATP-dependent RNA helicase mrh4, mitochondrial (mrh4) (Aspergillus fumigatus (strain ATCC MYA-4609 / CBS 101355 / FGSC A1100 / Af293) (Neosartorya fumigata)).